The chain runs to 111 residues: Large ribosomal subunit protein uL22 (111 aa).

Belongs to the universal ribosomal protein uL22 family. Part of the 50S ribosomal subunit.

This protein binds specifically to 23S rRNA; its binding is stimulated by other ribosomal proteins, e.g. L4, L17, and L20. It is important during the early stages of 50S assembly. It makes multiple contacts with different domains of the 23S rRNA in the assembled 50S subunit and ribosome. In terms of biological role, the globular domain of the protein is located near the polypeptide exit tunnel on the outside of the subunit, while an extended beta-hairpin is found that lines the wall of the exit tunnel in the center of the 70S ribosome. This Alkalilimnicola ehrlichii (strain ATCC BAA-1101 / DSM 17681 / MLHE-1) protein is Large ribosomal subunit protein uL22.